The following is a 442-amino-acid chain: 3-dehydroquinate synthase, chloroplastic (442 aa).

Residues 1 to 61 (MASSFCPKQA…TTRLKVLATS (61 aa)) constitute a chloroplast transit peptide. Residues N119, 150–152 (DGE), K155, 183–188 (GGVIGD), 208–209 (TT), K221, K230, and 248–251 (TLNT) each bind NAD(+). An a divalent metal cation-binding site is contributed by E263. K305 provides a ligand contact to NAD(+). H326 and H343 together coordinate a divalent metal cation.

This sequence belongs to the sugar phosphate cyclases superfamily. Dehydroquinate synthase family. In terms of assembly, homodimer. The cofactor is a divalent metal cation. NAD(+) serves as cofactor. In terms of tissue distribution, highly expressed in roots. Lower expression in stems, flowers and cotyledons. Barely detected in leaves.

Its subcellular location is the plastid. The protein resides in the chloroplast. It carries out the reaction 7-phospho-2-dehydro-3-deoxy-D-arabino-heptonate = 3-dehydroquinate + phosphate. The protein operates within metabolic intermediate biosynthesis; chorismate biosynthesis; chorismate from D-erythrose 4-phosphate and phosphoenolpyruvate: step 2/7. Functionally, catalyzes the second step in the shikimate pathway. This chain is 3-dehydroquinate synthase, chloroplastic (DHQS), found in Solanum lycopersicum (Tomato).